The sequence spans 314 residues: MTIRLLGRTEIRHLAKSIDFRPRKSFGQNFVHDANTVRRIVSASSVNRSDHVLEVGPGLGSLTLALLDRGARVTAVEIDPVLATQLPTTIAAHSHSEVNRLTVLNRDILTFKQSDMTEMPTALVANLPYNVAVPALLHLLAEFPSIRTVMVMVQAEVAERLAAEPGGKDYGVPSAKVRFFGNVRRYGMVSPTVFWPIPRVYSGLVRIDRYETSPWPTDTEFQEQVFELIDIAFAQRRKTSRNAFAEWAGSGNESASRLLAASIDPSRRGETLSINDFVRLLQRSADWHTVPKADDAGDDADAQAKADGAQVSTL.

Positions 29, 31, 56, 77, 107, and 126 each coordinate S-adenosyl-L-methionine. The interval Pro291 to Leu314 is disordered. Low complexity predominate over residues Gln303–Leu314.

Belongs to the class I-like SAM-binding methyltransferase superfamily. rRNA adenine N(6)-methyltransferase family. RsmA subfamily.

The protein resides in the cytoplasm. It catalyses the reaction adenosine(1518)/adenosine(1519) in 16S rRNA + 4 S-adenosyl-L-methionine = N(6)-dimethyladenosine(1518)/N(6)-dimethyladenosine(1519) in 16S rRNA + 4 S-adenosyl-L-homocysteine + 4 H(+). Specifically dimethylates two adjacent adenosines (A1518 and A1519) in the loop of a conserved hairpin near the 3'-end of 16S rRNA in the 30S particle. May play a critical role in biogenesis of 30S subunits. The chain is Ribosomal RNA small subunit methyltransferase A from Mycolicibacterium gilvum (strain PYR-GCK) (Mycobacterium gilvum (strain PYR-GCK)).